The sequence spans 196 residues: Imidazoleglycerol-phosphate dehydratase (196 aa).

The protein belongs to the imidazoleglycerol-phosphate dehydratase family.

It localises to the cytoplasm. It catalyses the reaction D-erythro-1-(imidazol-4-yl)glycerol 3-phosphate = 3-(imidazol-4-yl)-2-oxopropyl phosphate + H2O. The protein operates within amino-acid biosynthesis; L-histidine biosynthesis; L-histidine from 5-phospho-alpha-D-ribose 1-diphosphate: step 6/9. In Chlorobium chlorochromatii (strain CaD3), this protein is Imidazoleglycerol-phosphate dehydratase.